A 291-amino-acid chain; its full sequence is MKDYLVKALAFNGEVRAYSVRTTNTVSEAQKRHDTWRTASAALGRSLTAGTMMGAMLKGEQKLTIKVEGNGPIGPILVDAHANGDVRGYVTNPHVDFEGTEQGKLRVYQAVGTEGFVTVIKDIGMREPFIGQSPIVSGELGEDFTYYFAVSEQTPSSVGVGVLVNGDDSVLAAGGFILQIMPGAQEETISFIEERLQQIPPVSQLIEQGLSPEELLYEVLGEDKVKVLETMDVQFNCTCSRERIESVLISLGKAELEQIRAEEEETEVHCHFCNERHKFAKEDITSLIEKL.

Cystine bridges form between cysteine 237–cysteine 239 and cysteine 270–cysteine 273.

Belongs to the HSP33 family. In terms of processing, under oxidizing conditions two disulfide bonds are formed involving the reactive cysteines. Under reducing conditions zinc is bound to the reactive cysteines and the protein is inactive.

It is found in the cytoplasm. In terms of biological role, redox regulated molecular chaperone. Protects both thermally unfolding and oxidatively damaged proteins from irreversible aggregation. Plays an important role in the bacterial defense system toward oxidative stress. This is 33 kDa chaperonin from Bacillus mycoides (strain KBAB4) (Bacillus weihenstephanensis).